Consider the following 248-residue polypeptide: Granzyme-like protein 1 (248 aa).

An N-terminal signal peptide occupies residues 1–18 (MNLLLLLLTVSLAPTTEA). Residues 19–20 (AE) constitute a propeptide, activation peptide. A Peptidase S1 domain is found at 21–246 (IIGGHEADPH…FLSWIEETMK (226 aa)). C50 and C66 are joined by a disulfide. H65 acts as the Charge relay system in catalysis. N72 carries an N-linked (GlcNAc...) asparagine glycan. The active-site Charge relay system is the D109. 2 cysteine pairs are disulfide-bonded: C143–C210 and C174–C189. The active-site Charge relay system is S204.

The protein belongs to the peptidase S1 family. Granzyme subfamily. Duodenum.

Its function is as follows. This enzyme is necessary for target cell lysis in cell-mediated immune responses. This is Granzyme-like protein 1 from Rattus norvegicus (Rat).